We begin with the raw amino-acid sequence, 212 residues long: Lipid A acyltransferase PagP (212 aa).

The first 24 residues, 1–24 (MYLKRTLITLSLITLPIVPFLSYA), serve as a signal peptide directing secretion. Residues 36–47 (NLAPVTVDSSDP) show a composition bias toward polar residues. Residues 36–56 (NLAPVTVDSSDPVSDKQGESW) form a disordered region. Residues histidine 84, aspartate 127, and serine 128 contribute to the active site.

The protein belongs to the lipid A palmitoyltransferase family. As to quaternary structure, homodimer.

Its subcellular location is the cell outer membrane. The catalysed reaction is a lipid A + a 1,2-diacyl-sn-glycero-3-phosphocholine = a hepta-acyl lipid A + a 2-acyl-sn-glycero-3-phosphocholine. It catalyses the reaction a lipid IVA + a 1,2-diacyl-sn-glycero-3-phosphocholine = a lipid IVB + a 2-acyl-sn-glycero-3-phosphocholine. It carries out the reaction a lipid IIA + a 1,2-diacyl-sn-glycero-3-phosphocholine = a lipid IIB + a 2-acyl-sn-glycero-3-phosphocholine. Its function is as follows. Transfers a fatty acid residue from the sn-1 position of a phospholipid to the N-linked hydroxyfatty acid chain on the proximal unit of lipid A or its precursors. This is Lipid A acyltransferase PagP from Pectobacterium carotovorum subsp. carotovorum (strain PC1).